The following is a 160-amino-acid chain: CXXC motif containing zinc binding protein (160 aa).

Zn(2+)-binding residues include C33, C36, C67, and C70.

The protein belongs to the UPF0587 family.

This chain is CXXC motif containing zinc binding protein (czib), found in Xenopus laevis (African clawed frog).